We begin with the raw amino-acid sequence, 703 residues long: Lethal(3)malignant brain tumor-like protein 2 (703 aa).

The tract at residues 1–70 is disordered; sequence MEKPRGTEET…AGELPTSPLH (70 aa). Phosphoserine is present on Ser-13. The segment covering 15-25 has biased composition (acidic residues); sequence PMEEEEDDDLE. Over residues 35–49 the composition is skewed to low complexity; sequence SYNSSAGSESSSYLE. The span at 50–60 shows a compositional bias: acidic residues; sequence ESSEAENEDRE. Position 67 is a phosphoserine (Ser-67). The FCS-type zinc-finger motif lies at 81–116; it reads DGSGSEPAVCEMCGIVGTREAFFSKTKRFCSVSCSR. Positions 90, 93, 110, and 114 each coordinate Zn(2+). 4 MBT repeats span residues 179-283, 291-391, 397-500, and 508-604; these read FDWG…LVPP, TDWK…IKMS, MSHH…LTPP, and FDWE…LQPP. Residue Ser-338 is modified to Phosphoserine. Residue Lys-405 forms a Glycyl lysine isopeptide (Lys-Gly) (interchain with G-Cter in SUMO2) linkage. Disordered regions lie at residues 604–649 and 672–703; these read PVSA…KKPL and VKEE…ERDS. The span at 619–634 shows a compositional bias: basic residues; sequence TKKKKKQFGKKRKRIP. Glycyl lysine isopeptide (Lys-Gly) (interchain with G-Cter in SUMO2) cross-links involve residues Lys-647 and Lys-673. A phosphoserine mark is found at Ser-681, Ser-685, and Ser-687. Lys-698 participates in a covalent cross-link: Glycyl lysine isopeptide (Lys-Gly) (interchain with G-Cter in SUMO1); alternate. Residue Lys-698 forms a Glycyl lysine isopeptide (Lys-Gly) (interchain with G-Cter in SUMO2); alternate linkage.

Part of the E2F6.com-1 complex in G0 phase composed of E2F6, MGA, MAX, TFDP1, CBX3, BAT8, EUHMTASE1, RING1, RNF2, MBLR, BAT8 and YAF2.

The protein localises to the nucleus. Functionally, putative Polycomb group (PcG) protein. PcG proteins maintain the transcriptionally repressive state of genes, probably via a modification of chromatin, rendering it heritably changed in its expressibility. Its association with a chromatin-remodeling complex suggests that it may contribute to prevent expression of genes that trigger the cell into mitosis. Binds to monomethylated and dimethylated 'Lys-20' on histone H4. Binds histone H3 peptides that are monomethylated or dimethylated on 'Lys-4', 'Lys-9' or 'Lys-27'. This Rattus norvegicus (Rat) protein is Lethal(3)malignant brain tumor-like protein 2 (L3mbtl2).